We begin with the raw amino-acid sequence, 348 residues long: Protein RecA (348 aa).

ATP is bound at residue 65–72 (GPESSGKT).

It belongs to the RecA family.

Its subcellular location is the cytoplasm. Can catalyze the hydrolysis of ATP in the presence of single-stranded DNA, the ATP-dependent uptake of single-stranded DNA by duplex DNA, and the ATP-dependent hybridization of homologous single-stranded DNAs. It interacts with LexA causing its activation and leading to its autocatalytic cleavage. The protein is Protein RecA of Vibrio anguillarum (strain ATCC 68554 / 775) (Listonella anguillarum).